Reading from the N-terminus, the 726-residue chain is Probable dipeptidyl-peptidase 5 (726 aa).

The signal sequence occupies residues 1–19 (MGALQWLSITAAAASAVSA). N-linked (GlcNAc...) asparagine glycosylation is found at Asn97, Asn153, Asn259, Asn398, Asn453, and Asn529. The active-site Charge relay system is Ser564. The N-linked (GlcNAc...) asparagine glycan is linked to Asn611. Catalysis depends on charge relay system residues Asp647 and His679.

This sequence belongs to the peptidase S9C family.

The protein resides in the secreted. Extracellular dipeptidyl-peptidase which removes N-terminal dipeptides sequentially from polypeptides having unsubstituted N-termini. This is Probable dipeptidyl-peptidase 5 (dpp5) from Aspergillus niger.